Reading from the N-terminus, the 424-residue chain is MATPMVEDTSSFEEDQLASMSTEDITRATRLLDNEIRILKEDAQRTNLECDSYKEKIKENQEKIKLNKQLPYLVGNIVEILEMNPEDDAEEDGANIDLDSQRKGKCVVLKTSTRQTIFLPVVGLVDPDSLKPGDLVGVNKDSYLILDTLPSEYDSRVKAMEVDEKPTEDYNDIGGLEKQIQELVEAIVLPMTHKERFEKLGVRPPKGVLLYGPPGTGKTLMARACAAQTNATFLKLAGPQLVQMFIGDGAKLVRDAFQLAKEKAPCIIFIDEIDAIGTKRFDSEVSGDREVQRTMLELLNQLDGFSSDERIKVIAATNRADILDPALMRSGRLDRKIEFPHPTEEARARILQIHSRKMNVHPDVNFEELARSTDDFNGAQLKAVCVEAGMLALRRDATEVNHEDFNEGIIQVQAKKKASLNYYA.

A disordered region spans residues 1-21; it reads MATPMVEDTSSFEEDQLASMS. N-acetylalanine is present on alanine 2. The residue at position 19 (serine 19) is a Phosphoserine. Residue 212-219 coordinates ATP; that stretch reads GPPGTGKT. A Glycyl lysine isopeptide (Lys-Gly) (interchain with G-Cter in ubiquitin) cross-link involves residue lysine 235. The residue at position 278 (threonine 278) is an O-acetylthreonine. Glycyl lysine isopeptide (Lys-Gly) (interchain with G-Cter in ubiquitin) cross-links involve residues lysine 279 and lysine 416.

This sequence belongs to the AAA ATPase family. As to quaternary structure, component of the 19S regulatory particle (RP/PA700) base subcomplex of the 26S proteasome. The 26S proteasome is composed of a core protease (CP), known as the 20S proteasome, capped at one or both ends by the 19S regulatory particle (RP/PA700). The RP/PA700 complex is composed of at least 17 different subunits in two subcomplexes, the base and the lid, which form the portions proximal and distal to the 20S proteolytic core, respectively. Ubiquitous.

It is found in the cytoplasm. Its subcellular location is the nucleus. Its function is as follows. The 26S proteasome is involved in the ATP-dependent degradation of ubiquitinated proteins. The regulatory (or ATPase) complex confers ATP dependency and substrate specificity to the 26S complex. Interacts with transit peptides of proteins targeted to the chloroplast, and may be involved in the degradation of unimported plastid protein precursors. Plays a essential role in the gametophyte development. Involved in tolerance to zinc deficiency, possibly through alleviation of oxidative stresses or processing of poly-ubiquitinated proteins. The sequence is that of 26S proteasome regulatory subunit 6A homolog A from Arabidopsis thaliana (Mouse-ear cress).